The sequence spans 415 residues: Serine hydroxymethyltransferase (415 aa).

(6S)-5,6,7,8-tetrahydrofolate-binding positions include Leu-117 and 121 to 123 (GHL). N6-(pyridoxal phosphate)lysine is present on Lys-226. Residues Glu-241 and 349–351 (SPF) each bind (6S)-5,6,7,8-tetrahydrofolate.

Belongs to the SHMT family. As to quaternary structure, homodimer. Requires pyridoxal 5'-phosphate as cofactor.

The protein resides in the cytoplasm. The enzyme catalyses (6R)-5,10-methylene-5,6,7,8-tetrahydrofolate + glycine + H2O = (6S)-5,6,7,8-tetrahydrofolate + L-serine. The protein operates within one-carbon metabolism; tetrahydrofolate interconversion. It functions in the pathway amino-acid biosynthesis; glycine biosynthesis; glycine from L-serine: step 1/1. Catalyzes the reversible interconversion of serine and glycine with tetrahydrofolate (THF) serving as the one-carbon carrier. This reaction serves as the major source of one-carbon groups required for the biosynthesis of purines, thymidylate, methionine, and other important biomolecules. Also exhibits THF-independent aldolase activity toward beta-hydroxyamino acids, producing glycine and aldehydes, via a retro-aldol mechanism. The polypeptide is Serine hydroxymethyltransferase (Trichlorobacter lovleyi (strain ATCC BAA-1151 / DSM 17278 / SZ) (Geobacter lovleyi)).